We begin with the raw amino-acid sequence, 286 residues long: MVRTLNNCPAPAKLNLFLHVTGRRADGYHLLQSVFQLIDRGDVLHFSVRDDGLIHRSTELAGVPADSDLVVRAARLLQTEAKKQGKTPGADIAIEKKLPMGGGLGGGSSDAATTLLALNHLWQTGLTRAELMALGLQLGADVPFFLFGQNAFAEGIGEALMAVKTPESWFLVIEPGVSVPTQQIFSSLELTRDTKPVKISDFSRAQESFGKNDLQVVAANLFPPIADAIKWLQQFGDARMTGSGACVFCPFKEEQQVDAVLATVPQQWKAWKAKAITHHPLAYLAT.

K13 is a catalytic residue. 99-109 is an ATP binding site; sequence PMGGGLGGGSS. Residue D141 is part of the active site.

The protein belongs to the GHMP kinase family. IspE subfamily.

The enzyme catalyses 4-CDP-2-C-methyl-D-erythritol + ATP = 4-CDP-2-C-methyl-D-erythritol 2-phosphate + ADP + H(+). It participates in isoprenoid biosynthesis; isopentenyl diphosphate biosynthesis via DXP pathway; isopentenyl diphosphate from 1-deoxy-D-xylulose 5-phosphate: step 3/6. Functionally, catalyzes the phosphorylation of the position 2 hydroxy group of 4-diphosphocytidyl-2C-methyl-D-erythritol. The chain is 4-diphosphocytidyl-2-C-methyl-D-erythritol kinase from Herminiimonas arsenicoxydans.